The chain runs to 215 residues: Chymomexicain (215 aa).

3 disulfide bridges follow: cysteine 22/cysteine 63, cysteine 56/cysteine 96, and cysteine 154/cysteine 201. Cysteine 25 is an active-site residue. Active-site residues include histidine 160 and asparagine 176.

The protein belongs to the peptidase C1 family.

In terms of biological role, cysteine protease. In Jacaratia mexicana (Wild papaya), this protein is Chymomexicain.